The following is an 81-amino-acid chain: DNA-binding protein TubR (81 aa).

Monomer; probably dimerizes when bound to DNA. Binds to TubZ when associated with tubC DNA.

Its subcellular location is the host cytoplasm. A DNA-binding protein that is part of the type III partition system presumably used to ensure correct segregation of this bacteriophage. Binds to tubC (centromere-like site) DNA upstream of its own gene in a sequence-specific fashion (consensus TTGAC); binds to multiple sites in the tubC region, probably spreading from an initial site. Upon binding to tubC forms flexible loops over about 1 kb of DNA that forms 2 rings, covering tubC and the promoter region. This probably shuts off transcription of the operon. DNA is both bent and untwisted by TubR. The TubR-tubC DNA complex binds to TubZ forming large bundles and decreasing TubZ's GTPase activity. The sequence is that of DNA-binding protein TubR from Clostridium botulinum C phage (Clostridium botulinum C bacteriophage).